We begin with the raw amino-acid sequence, 314 residues long: DNA-directed RNA polymerase subunit alpha (314 aa).

The alpha N-terminal domain (alpha-NTD) stretch occupies residues methionine 1–serine 228. Residues proline 242–aspartate 314 are alpha C-terminal domain (alpha-CTD).

This sequence belongs to the RNA polymerase alpha chain family. As to quaternary structure, homodimer. The RNAP catalytic core consists of 2 alpha, 1 beta, 1 beta' and 1 omega subunit. When a sigma factor is associated with the core the holoenzyme is formed, which can initiate transcription.

It carries out the reaction RNA(n) + a ribonucleoside 5'-triphosphate = RNA(n+1) + diphosphate. Its function is as follows. DNA-dependent RNA polymerase catalyzes the transcription of DNA into RNA using the four ribonucleoside triphosphates as substrates. In Leuconostoc mesenteroides subsp. mesenteroides (strain ATCC 8293 / DSM 20343 / BCRC 11652 / CCM 1803 / JCM 6124 / NCDO 523 / NBRC 100496 / NCIMB 8023 / NCTC 12954 / NRRL B-1118 / 37Y), this protein is DNA-directed RNA polymerase subunit alpha.